We begin with the raw amino-acid sequence, 65 residues long: Small ribosomal subunit protein eS27 (65 aa).

4 residues coordinate Zn(2+): Cys21, Cys24, Cys40, and Cys43. A C4-type zinc finger spans residues 21 to 43; that stretch reads CKDCGNVQVVFARPSSVVTCNIC.

It belongs to the eukaryotic ribosomal protein eS27 family. Part of the 30S ribosomal subunit. It depends on Zn(2+) as a cofactor.

The sequence is that of Small ribosomal subunit protein eS27 from Thermoplasma volcanium (strain ATCC 51530 / DSM 4299 / JCM 9571 / NBRC 15438 / GSS1).